The sequence spans 132 residues: Fatty acid-binding protein 9 (132 aa).

Phosphoserine occurs at positions 13, 14, 40, 42, 44, and 91.

This sequence belongs to the calycin superfamily. Fatty-acid binding protein (FABP) family. As to expression, testis.

It is found in the cytoplasm. The polypeptide is Fatty acid-binding protein 9 (Fabp9) (Mus musculus (Mouse)).